Here is an 898-residue protein sequence, read N- to C-terminus: Translation initiation factor IF-2 (898 aa).

The interval 51–302 (KEHGDATGSE…RKGRINKPMS (252 aa)) is disordered. Composition is skewed to basic and acidic residues over residues 100–164 (SSVE…KRET) and 171–230 (RSDE…KETV). Positions 234 to 245 (QENTDYHVTTSR) are enriched in polar residues. Residues 263–273 (RRSTKANKRKM) show a composition bias toward basic residues. Residues 274-286 (SSRDDNQERDSRP) show a composition bias toward basic and acidic residues. The segment covering 287–297 (RGGKAGRKGRI) has biased composition (basic residues). In terms of domain architecture, tr-type G spans 397-566 (SRAPVVTIMG…LLQAEVLELK (170 aa)). The tract at residues 406-413 (GHVDHGKT) is G1. 406–413 (GHVDHGKT) is a GTP binding site. The interval 431 to 435 (GITQH) is G2. A G3 region spans residues 452–455 (DTPG). Residues 452 to 456 (DTPGH) and 506 to 509 (NKID) each bind GTP. The interval 506-509 (NKID) is G4. A G5 region spans residues 542-544 (SAK).

Belongs to the TRAFAC class translation factor GTPase superfamily. Classic translation factor GTPase family. IF-2 subfamily.

It is found in the cytoplasm. Functionally, one of the essential components for the initiation of protein synthesis. Protects formylmethionyl-tRNA from spontaneous hydrolysis and promotes its binding to the 30S ribosomal subunits. Also involved in the hydrolysis of GTP during the formation of the 70S ribosomal complex. This is Translation initiation factor IF-2 from Vibrio cholerae serotype O1 (strain ATCC 39541 / Classical Ogawa 395 / O395).